Reading from the N-terminus, the 427-residue chain is Trigger factor (427 aa).

The PPIase FKBP-type domain occupies 163 to 248; that stretch reads GDTVILDFEG…LHEIKTKEVP (86 aa).

Belongs to the FKBP-type PPIase family. Tig subfamily.

The protein localises to the cytoplasm. The enzyme catalyses [protein]-peptidylproline (omega=180) = [protein]-peptidylproline (omega=0). Functionally, involved in protein export. Acts as a chaperone by maintaining the newly synthesized protein in an open conformation. Functions as a peptidyl-prolyl cis-trans isomerase. This Listeria monocytogenes serotype 4b (strain CLIP80459) protein is Trigger factor.